Reading from the N-terminus, the 207-residue chain is Guanylate kinase (207 aa).

The 180-residue stretch at 5–184 (GNLFIVSAPS…ALADLKSIIF (180 aa)) folds into the Guanylate kinase-like domain. Residue 12 to 19 (APSGAGKS) participates in ATP binding.

This sequence belongs to the guanylate kinase family.

It localises to the cytoplasm. It catalyses the reaction GMP + ATP = GDP + ADP. Functionally, essential for recycling GMP and indirectly, cGMP. In Shewanella denitrificans (strain OS217 / ATCC BAA-1090 / DSM 15013), this protein is Guanylate kinase.